The sequence spans 768 residues: Putative calcium up-regulated protein H (768 aa).

The disordered stretch occupies residues 1-22 (MINIEDISKSSNQSEEKQLKST). 2 consecutive Ricin B-type lectin domains span residues 25 to 145 (KPKY…WTTF) and 116 to 248 (QGNG…WGIN).

The protein belongs to the cup family.

The protein localises to the cytoplasm. Its subcellular location is the membrane. Its function is as follows. May play an important role in stabilizing and/or regulating the cell membrane during Ca(2+) stress or certain stages of development. The chain is Putative calcium up-regulated protein H (cupH) from Dictyostelium discoideum (Social amoeba).